The sequence spans 219 residues: Small ribosomal subunit protein uS3 (219 aa).

The 70-residue stretch at 38 to 107 (IREYIENKMK…RVHINVVEVK (70 aa)) folds into the KH type-2 domain.

The protein belongs to the universal ribosomal protein uS3 family. As to quaternary structure, part of the 30S ribosomal subunit. Forms a tight complex with proteins S10 and S14.

In terms of biological role, binds the lower part of the 30S subunit head. Binds mRNA in the 70S ribosome, positioning it for translation. In Exiguobacterium sp. (strain ATCC BAA-1283 / AT1b), this protein is Small ribosomal subunit protein uS3.